Reading from the N-terminus, the 288-residue chain is Xyloglucan endotransglucosylase protein 8 (288 aa).

The N-terminal stretch at 1-25 is a signal peptide; it reads MAASPYSIFAVQLLLLASWMLSSSS. A GH16 domain is found at 26–215; the sequence is SNFNQDFNIA…WTQAPFTTSY (190 aa). Glutamate 102 serves as the catalytic Nucleophile. Residue glutamate 106 is the Proton donor of the active site. Residue glutamate 106 participates in xyloglucan binding. Residue asparagine 110 is glycosylated (N-linked (GlcNAc...) asparagine). Xyloglucan-binding positions include 119–121, 129–131, 194–195, and glycine 199; these read HTN, ERE, and EW. Cystine bridges form between cysteine 224/cysteine 233 and cysteine 268/cysteine 282. A xyloglucan-binding site is contributed by arginine 273.

It belongs to the glycosyl hydrolase 16 family. XTH group 2 subfamily. Contains at least one intrachain disulfide bond essential for its enzymatic activity. Highly expressed in mature fruits. Very low expression in leaves, flowers, calyces and stems.

It is found in the secreted. The protein resides in the cell wall. The protein localises to the extracellular space. Its subcellular location is the apoplast. The enzyme catalyses breaks a beta-(1-&gt;4) bond in the backbone of a xyloglucan and transfers the xyloglucanyl segment on to O-4 of the non-reducing terminal glucose residue of an acceptor, which can be a xyloglucan or an oligosaccharide of xyloglucan.. Functionally, catalyzes xyloglucan endotransglycosylation (XET). Cleaves and religates xyloglucan polymers. Does not catalyze xyloglucan endohydrolysis (XEH). Overexpression in Arabidopsis transgenic plants causes accelerated dark-induced leaf senescence and higher lipid peroxidation of the leaf cells. Overexpression in transgenic tomato plants promotes fruit ripening and softening. Probably involved in cell wall restructuring during postharvest fruit softening. This Diospyros kaki (Kaki persimmon) protein is Xyloglucan endotransglucosylase protein 8.